A 209-amino-acid polypeptide reads, in one-letter code: Thiamine-phosphate synthase (209 aa).

4-amino-2-methyl-5-(diphosphooxymethyl)pyrimidine-binding positions include 36-40 and Asn68; that span reads QYRDK. The Mg(2+) site is built by Asp69 and Asp87. 4-amino-2-methyl-5-(diphosphooxymethyl)pyrimidine is bound at residue Thr106. Residue 133-135 coordinates 2-[(2R,5Z)-2-carboxy-4-methylthiazol-5(2H)-ylidene]ethyl phosphate; that stretch reads SST. Lys136 contributes to the 4-amino-2-methyl-5-(diphosphooxymethyl)pyrimidine binding site. Gly163 lines the 2-[(2R,5Z)-2-carboxy-4-methylthiazol-5(2H)-ylidene]ethyl phosphate pocket.

Belongs to the thiamine-phosphate synthase family. Mg(2+) is required as a cofactor.

It catalyses the reaction 2-[(2R,5Z)-2-carboxy-4-methylthiazol-5(2H)-ylidene]ethyl phosphate + 4-amino-2-methyl-5-(diphosphooxymethyl)pyrimidine + 2 H(+) = thiamine phosphate + CO2 + diphosphate. It carries out the reaction 2-(2-carboxy-4-methylthiazol-5-yl)ethyl phosphate + 4-amino-2-methyl-5-(diphosphooxymethyl)pyrimidine + 2 H(+) = thiamine phosphate + CO2 + diphosphate. The enzyme catalyses 4-methyl-5-(2-phosphooxyethyl)-thiazole + 4-amino-2-methyl-5-(diphosphooxymethyl)pyrimidine + H(+) = thiamine phosphate + diphosphate. Its pathway is cofactor biosynthesis; thiamine diphosphate biosynthesis; thiamine phosphate from 4-amino-2-methyl-5-diphosphomethylpyrimidine and 4-methyl-5-(2-phosphoethyl)-thiazole: step 1/1. Functionally, condenses 4-methyl-5-(beta-hydroxyethyl)thiazole monophosphate (THZ-P) and 2-methyl-4-amino-5-hydroxymethyl pyrimidine pyrophosphate (HMP-PP) to form thiamine monophosphate (TMP). The polypeptide is Thiamine-phosphate synthase (Pseudomonas aeruginosa (strain LESB58)).